Reading from the N-terminus, the 135-residue chain is uncharacterized protein (135 aa).

This is an uncharacterized protein from Homo sapiens (Human).